We begin with the raw amino-acid sequence, 471 residues long: Glutamate--tRNA ligase (471 aa).

The 'HIGH' region motif lies at 9–19 (PSPTGYLHVGG). 4 residues coordinate Zn(2+): C98, C100, C125, and H127. A 'KMSKS' region motif is present at residues 237 to 241 (KLSKR). K240 contributes to the ATP binding site.

This sequence belongs to the class-I aminoacyl-tRNA synthetase family. Glutamate--tRNA ligase type 1 subfamily. As to quaternary structure, monomer. Zn(2+) is required as a cofactor.

Its subcellular location is the cytoplasm. The enzyme catalyses tRNA(Glu) + L-glutamate + ATP = L-glutamyl-tRNA(Glu) + AMP + diphosphate. Functionally, catalyzes the attachment of glutamate to tRNA(Glu) in a two-step reaction: glutamate is first activated by ATP to form Glu-AMP and then transferred to the acceptor end of tRNA(Glu). In Salmonella choleraesuis (strain SC-B67), this protein is Glutamate--tRNA ligase.